The chain runs to 93 residues: MKECVPVKTFESLFAELTERAATRPEGSGTVAALDAGVHAQGKKVIEEAGEVWIAAEYQSDEQLAEEISQLLYWTQVLMVGRGLTLEDVYRHL.

It belongs to the PRA-PH family.

It is found in the cytoplasm. It carries out the reaction 1-(5-phospho-beta-D-ribosyl)-ATP + H2O = 1-(5-phospho-beta-D-ribosyl)-5'-AMP + diphosphate + H(+). It participates in amino-acid biosynthesis; L-histidine biosynthesis; L-histidine from 5-phospho-alpha-D-ribose 1-diphosphate: step 2/9. The polypeptide is Phosphoribosyl-ATP pyrophosphatase (Rhodococcus erythropolis (strain PR4 / NBRC 100887)).